Consider the following 173-residue polypeptide: Large ribosomal subunit protein uL10 (173 aa).

Belongs to the universal ribosomal protein uL10 family. As to quaternary structure, part of the ribosomal stalk of the 50S ribosomal subunit. The N-terminus interacts with L11 and the large rRNA to form the base of the stalk. The C-terminus forms an elongated spine to which L12 dimers bind in a sequential fashion forming a multimeric L10(L12)X complex.

Functionally, forms part of the ribosomal stalk, playing a central role in the interaction of the ribosome with GTP-bound translation factors. This is Large ribosomal subunit protein uL10 from Chlorobaculum tepidum (strain ATCC 49652 / DSM 12025 / NBRC 103806 / TLS) (Chlorobium tepidum).